The following is a 367-amino-acid chain: Cyclin-Y-like protein 1 (367 aa).

A phosphoserine mark is found at S73, S111, and S118. One can recognise a Cyclin N-terminal domain in the interval 186 to 291; sequence EYFKHDPEHK…FLELLQFNIN (106 aa). S352 carries the post-translational modification Phosphoserine.

The protein belongs to the cyclin family. Cyclin Y subfamily. Interacts with CDK16; this interaction mutually increases the stability of CDK16 and CCNYL1 and increases the kinase activity of CDK16. Highly expressed in the testis. Largely restricted to germ cells in the testis.

It is found in the cell membrane. In terms of biological role, key regulator of Wnt signaling implicated in various biological processes including male fertility, embryonic neurogenesis and cortex development. Activates the cyclin-dependent kinase CDK16, and promotes sperm maturation. This Mus musculus (Mouse) protein is Cyclin-Y-like protein 1.